We begin with the raw amino-acid sequence, 202 residues long: Casparian strip membrane protein 1 (202 aa).

Over residues 1 to 13 the composition is skewed to polar residues; sequence MEKSESSTIQIAE. The interval 1–30 is disordered; it reads MEKSESSTIQIAESSKDRKGKAPLLPPPVH. The Cytoplasmic portion of the chain corresponds to 1–42; sequence MEKSESSTIQIAESSKDRKGKAPLLPPPVHHERAAGYKRGVA. The chain crosses the membrane as a helical span at residues 43 to 63; the sequence is IFDLILRISAATAALAATIVM. Over 64–90 the chain is Extracellular; that stretch reads GTTEQTLPFFTQFFQFRASYDDLPTFT. A helical transmembrane segment spans residues 91–111; it reads FFVIAMAIVTGYLILSVPFSI. Residues 112–130 lie on the Cytoplasmic side of the membrane; sequence VCIARPVVAAPRILLILCD. A helical membrane pass occupies residues 131–151; the sequence is TLTVTLATSAAGASAAIVYLA. At 152 to 177 the chain is on the extracellular side; the sequence is HNGXSDANWLAICQQFNDFCQRVSGA. A helical transmembrane segment spans residues 178-198; it reads VVAAFVSAVLLIFLVVLSAIV. The Cytoplasmic portion of the chain corresponds to 199–202; that stretch reads LKKH.

This sequence belongs to the Casparian strip membrane proteins (CASP) family. Homodimer and heterodimers.

Its subcellular location is the cell membrane. In terms of biological role, regulates membrane-cell wall junctions and localized cell wall deposition. Required for establishment of the Casparian strip membrane domain (CSD) and the subsequent formation of Casparian strips, a cell wall modification of the root endodermis that determines an apoplastic barrier between the intraorganismal apoplasm and the extraorganismal apoplasm and prevents lateral diffusion. This is Casparian strip membrane protein 1 from Triphysaria pusilla (Dwarf owl's-clover).